The sequence spans 1765 residues: Sodium channel protein type 11 subunit alpha (1765 aa).

Residues 1–126 lie on the Cytoplasmic side of the membrane; the sequence is MEERYYPVIF…PLRSLMIRIS (126 aa). An I repeat occupies 115–403; the sequence is FNPLRSLMIR…VTMAYEEQNR (289 aa). A helical membrane pass occupies residues 127-148; it reads VHSVFSMFIICTVIINCMFMAN. The Extracellular segment spans residues 149 to 157; sequence SMERSFDND. A helical transmembrane segment spans residues 158–177; sequence IPEYVFIGIYILEAVIKILA. The Cytoplasmic segment spans residues 178–189; sequence RGFIVDEFSFLR. The helical transmembrane segment at 190–209 threads the bilayer; it reads DPWNWLDFIVIGTAIATCFP. At 210-216 the chain is on the extracellular side; the sequence is GSQVNLS. N214 carries N-linked (GlcNAc...) asparagine glycosylation. Residues 217–236 form a helical; Voltage-sensor membrane-spanning segment; the sequence is ALRTFRVFRALKAISVISGL. Residues 237-252 are Cytoplasmic-facing; it reads KVIVGALLRSVKKLVD. The helical transmembrane segment at 253–266 threads the bilayer; that stretch reads VMVLTLFCLSIFAL. Residues 267-339 are Extracellular-facing; it reads VGQQLFMGIL…PDNNYTKFDN (73 aa). Cysteines 280 and 317 form a disulfide. N319 and N333 each carry an N-linked (GlcNAc...) asparagine glycan. The segment at residues 340–364 is an intramembrane region (pore-forming); the sequence is FGWSFLAMFRVMTQDSWERLYRQIL. The Extracellular segment spans residues 365 to 371; it reads RTSGIYF. A helical membrane pass occupies residues 372-397; it reads VFFFVVVIFLGSFYLLNLTLAVVTMA. Residues 398-567 are Cytoplasmic-facing; it reads YEEQNRNVAA…WLCIKKVLRT (170 aa). The stretch at 554–820 is one II repeat; it reads CSPQWLCIKK…EGETRKTKVQ (267 aa). A helical transmembrane segment spans residues 568-591; the sequence is IMTDPFTELAITICIIINTVFLAV. The Extracellular portion of the chain corresponds to 592-602; it reads EHHNMDDNLKT. Residues 603-626 form a helical membrane-spanning segment; it reads ILKIGNWVFTGIFIAEMCLKIIAL. Residues 627 to 634 are Cytoplasmic-facing; the sequence is DPYHYFRH. A helical membrane pass occupies residues 635–656; that stretch reads GWNVFDSIVALLSLADVLYNTL. At 657–662 the chain is on the extracellular side; the sequence is SDNNRS. N-linked (GlcNAc...) asparagine glycosylation occurs at N660. A helical; Voltage-sensor transmembrane segment spans residues 663–682; that stretch reads FLASLRVLRVFKLAKSWPTL. Residues 683 to 697 lie on the Cytoplasmic side of the membrane; the sequence is NTLIKIIGHSVGALG. Residues 698–720 form a helical membrane-spanning segment; the sequence is NLTVVLTIVVFIFSVVGMRLFGT. Residues 721–741 are Extracellular-facing; it reads KFNKTAYATQERPRRRWHMDN. N-linked (GlcNAc...) asparagine glycosylation is present at N723. An intramembrane region (pore-forming) is located at residues 742–762; it reads FYHSFLVVFRILCGEWIENMW. Topologically, residues 763–772 are extracellular; it reads GCMQDMDGSP. An intrachain disulfide couples C764 to C774. Residues 773–798 traverse the membrane as a helical segment; it reads LCIIVFVLIMVIGKLVVLNLFIALLL. Residues 799-1029 are Cytoplasmic-facing; sequence NSFSNEEKDG…WWNIRKTCYQ (231 aa). An III repeat occupies 1022 to 1319; it reads NIRKTCYQIV…KKYYNAMKKL (298 aa). The helical transmembrane segment at 1030 to 1052 threads the bilayer; the sequence is IVKHSWFESFIIFVILLSSGALI. At 1053-1066 the chain is on the extracellular side; the sequence is FEDVNLPSRPQVEK. A helical membrane pass occupies residues 1067 to 1092; sequence LLRCTDNIFTFIFLLEMILKWVAFGF. Residues 1093–1098 are Cytoplasmic-facing; that stretch reads RRYFTS. The chain crosses the membrane as a helical span at residues 1099–1116; it reads AWCWLDFLIVVVSVLSLM. Residue N1117 is a topological domain, extracellular. A helical; Voltage-sensor membrane pass occupies residues 1118–1139; sequence LPSLKSFRTLRALRPLRALSQF. Topologically, residues 1140–1158 are cytoplasmic; sequence EGMKVVVYALISAIPAILN. Residues 1159 to 1180 form a helical membrane-spanning segment; that stretch reads VLLVCLIFWLVFCILGVNLFSG. Residues 1181–1223 lie on the Extracellular side of the membrane; it reads KFGRCINGTDINMYLDFTEVPNRSQCNISNYSWKVPQVNFDNV. Residues N1187, N1202, N1207, and N1210 are each glycosylated (N-linked (GlcNAc...) asparagine). Positions 1224-1245 form an intramembrane region, pore-forming; it reads GNAYLALLQVATYKGWLEIMNA. The Extracellular segment spans residues 1246–1261; that stretch reads AVDSREKDEQPDFEAN. A helical transmembrane segment spans residues 1262-1288; the sequence is LYAYLYFVVFIIFGSFFTLNLFIGVII. Residues 1289–1341 lie on the Cytoplasmic side of the membrane; sequence DNFNQQQKKLGGQDIFMTEEQKKYYNAMKKLGTKKPQKPIPRPLNKCQAFVFD. Residues 1328 to 1619 form an IV repeat; sequence IPRPLNKCQA…WEKFDPEASQ (292 aa). A helical membrane pass occupies residues 1342–1365; it reads LVTSQVFDVIILGLIVLNMIIMMA. Residues 1366–1376 are Extracellular-facing; the sequence is ESADQPKDVKK. The helical transmembrane segment at 1377–1400 threads the bilayer; sequence TFDILNIAFVVIFTIECLIKVFAL. At 1401–1406 the chain is on the cytoplasmic side; the sequence is RQHYFT. Residues 1407 to 1430 form a helical membrane-spanning segment; the sequence is NGWNLFDCVVVVLSIISTLVSRLE. At 1431 to 1440 the chain is on the extracellular side; the sequence is DSDISFPPTL. A helical; Voltage-sensor transmembrane segment spans residues 1441–1463; sequence FRVVRLARIGRILRLVRAARGIR. Residues 1464-1478 lie on the Cytoplasmic side of the membrane; that stretch reads TLLFALMMSLPSLFN. The chain crosses the membrane as a helical span at residues 1479 to 1501; sequence IGLLLFLVMFIYAIFGMSWFSKV. Over 1502 to 1515 the chain is Extracellular; it reads KKGSGIDDIFNFET. Residues 1516 to 1538 constitute an intramembrane region (pore-forming); the sequence is FTGSMLCLFQITTSAGWDTLLNP. At 1539–1559 the chain is on the extracellular side; the sequence is MLEAKEHCNSSSQDSCQQPQI. Residue N1547 is glycosylated (N-linked (GlcNAc...) asparagine). A helical membrane pass occupies residues 1560–1584; sequence AVVYFVSYIIISFLIVVNMYIAVIL. Residues 1585–1765 are Cytoplasmic-facing; sequence ENFNTATEES…DVAKVKVHND (181 aa).

Belongs to the sodium channel (TC 1.A.1.10) family. Nav1.9/SCN11A subfamily. In terms of assembly, the voltage-resistant sodium channel consists of an ion conducting pore forming alpha-subunit regulated by one or more auxiliary subunits SCN1B, SCN2B and SCN3B. Expressed (at protein level) in myenteric sensory neurons. Expressed in small sensory neurons of the dorsal root ganglia (C-fiber neurons) and trigeminal ganglia.

It localises to the cell membrane. It catalyses the reaction Na(+)(in) = Na(+)(out). Its activity is regulated as follows. Activity is not sensitive to inhibition by tetrodotoxin. Sodium channel mediating the voltage-dependent sodium ion permeability of excitable membranes. Assuming opened or closed conformations in response to the voltage difference across the membrane, the protein forms a sodium-selective channel through which sodium ions may pass in accordance with their electrochemical gradient. Involved in membrane depolarization during action potential in nociceptors which function as key relay stations for the electrical transmission of pain signals from the periphery to the central nervous system. Also involved in rapid BDNF-evoked neuronal depolarization. This is Sodium channel protein type 11 subunit alpha from Rattus norvegicus (Rat).